Consider the following 693-residue polypeptide: Phenoloxidase subunit 2 (693 aa).

Positions 1–51 (MADVFESLELLFDRPNEPLITPKGENNSVFQLTEQFLTEDYANNGIELNNR) are excised as a propeptide. N26 and N64 each carry an N-linked (GlcNAc...) asparagine glycan. Cu cation contacts are provided by H213, H217, and H243. The active-site Proton acceptor is E351. Cu cation contacts are provided by H366, H370, and H406. N462 and N494 each carry an N-linked (GlcNAc...) asparagine glycan. Intrachain disulfides connect C583/C627 and C585/C634. N680 carries an N-linked (GlcNAc...) asparagine glycan.

As to quaternary structure, heterodimer. Cu(2+) is required as a cofactor. In terms of processing, the N-terminus is blocked. As to expression, synthesized by hemocytes and released into the hemolymph plasma.

Its subcellular location is the secreted. The enzyme catalyses 2 L-dopa + O2 = 2 L-dopaquinone + 2 H2O. It carries out the reaction L-tyrosine + O2 = L-dopaquinone + H2O. Functionally, this is a copper-containing oxidase that functions in the formation of pigments such as melanins and other polyphenolic compounds. Catalyzes the rate-limiting conversions of tyrosine to DOPA, DOPA to DOPA-quinone and possibly 5,6 dihydroxyindole to indole-5'6 quinone. The sequence is that of Phenoloxidase subunit 2 from Bombyx mori (Silk moth).